Reading from the N-terminus, the 378-residue chain is Homoserine O-acetyltransferase (378 aa).

One can recognise an AB hydrolase-1 domain in the interval Asn-52–Leu-337. Ser-148 serves as the catalytic Nucleophile. Arg-217 is a substrate binding site. Catalysis depends on residues Asp-304 and His-333. Asp-334 contributes to the substrate binding site.

The protein belongs to the AB hydrolase superfamily. MetX family. As to quaternary structure, homodimer.

It is found in the cytoplasm. It catalyses the reaction L-homoserine + acetyl-CoA = O-acetyl-L-homoserine + CoA. Its pathway is amino-acid biosynthesis; L-methionine biosynthesis via de novo pathway; O-acetyl-L-homoserine from L-homoserine: step 1/1. Functionally, transfers an acetyl group from acetyl-CoA to L-homoserine, forming acetyl-L-homoserine. The sequence is that of Homoserine O-acetyltransferase from Chloroherpeton thalassium (strain ATCC 35110 / GB-78).